A 352-amino-acid polypeptide reads, in one-letter code: NADP-dependent oxidoreductase RED1 (352 aa).

NADP(+) is bound by residues 166–169 (GAVG), Lys-192, Tyr-208, Asn-231, and 285–287 (FIV).

Belongs to the NADP-dependent oxidoreductase L4BD family.

It functions in the pathway mycotoxin biosynthesis. Its function is as follows. NADP-dependent oxidoreductase; part of the Tox1B locus, one of the 2 loci that mediate the biosynthesis of T-toxin, a family of linear polyketides 37 to 45 carbons in length, of which the major component is 41 carbons, and which leads to high virulence to maize. One of the PKSs (PKS1 or PKS2) could synthesize a precursor, used subsequently by the other PKS as starter unit, to add additional carbons. Variability in the length of the final carbon backbone C35-47 could be achieved by varying the number of condensation cycles, or use of different starter or extender units or might be due to decarboxylation of the penultimate product, catalyzed by DEC1. Additional proteins are required for the biosynthesis of T-toxin, including oxidoreductases RED1, RED2, RED3, LAM1 and OXI1, as well as esterase TOX9. In Cochliobolus heterostrophus (strain C4 / ATCC 48331 / race T) (Southern corn leaf blight fungus), this protein is NADP-dependent oxidoreductase RED1.